We begin with the raw amino-acid sequence, 326 residues long: tRNA dimethylallyltransferase (326 aa).

ATP is bound at residue 10–17 (GPTGTGKT). Substrate is bound at residue 12–17 (TGTGKT). Residues 35 to 38 (DSMQ) are interaction with substrate tRNA.

It belongs to the IPP transferase family. In terms of assembly, monomer. Mg(2+) is required as a cofactor.

It catalyses the reaction adenosine(37) in tRNA + dimethylallyl diphosphate = N(6)-dimethylallyladenosine(37) in tRNA + diphosphate. In terms of biological role, catalyzes the transfer of a dimethylallyl group onto the adenine at position 37 in tRNAs that read codons beginning with uridine, leading to the formation of N6-(dimethylallyl)adenosine (i(6)A). In Dictyoglomus turgidum (strain DSM 6724 / Z-1310), this protein is tRNA dimethylallyltransferase.